Consider the following 425-residue polypeptide: MPRITASKIVLLIALSFCITVIYHFPIATRSSKEYDEYGNEYENVASIESDIKNVRRLLDEVPDPSQNRLQFLKLDEHAFAFSAYTDDRNGNMGYKYVRVLMFITSQDNFSCEINGRKSTDVSLYEFSENHKMKWQMFILNCKLPDGIDFNNVSSVKVIRSTTKQFVDVPIRYRIQDEKIITPDEYDYKMSICVPALFGNGYDAKRIVEFIELNTLQGIEKIYIYTNQKELDGSMKKTLKYYSDNHKITLIDYTLPFREDGVWYHGQLATVTDCLLRNTGITKYTFFNDFDEFFVPVIKSRTLFETISGLFEDPTIGSQRTALKYINAKIKSAPYSLKNIVSEKRIETRFTKCVVRPEMVFEQGIHHTSRVIQDNYKTVSHGGSLLRVYHYKDKKYCCEDESLLKKRHGDQLREKFDSVVGLLDL.

Residues 1 to 8 (MPRITASK) lie on the Cytoplasmic side of the membrane. Residues 9–29 (IVLLIALSFCITVIYHFPIAT) form a helical; Signal-anchor for type II membrane protein membrane-spanning segment. Residues 30 to 425 (RSSKEYDEYG…FDSVVGLLDL (396 aa)) are Lumenal-facing. Asparagine 109 and asparagine 152 each carry an N-linked (GlcNAc...) asparagine glycan. In terms of domain architecture, GT92 spans 189–394 (KMSICVPALF…LLRVYHYKDK (206 aa)).

Belongs to the glycosyltransferase 92 family. Mn(2+) serves as cofactor. Post-translationally, N-glycosylated. Expressed in intestine and coelomocytes.

The protein localises to the golgi apparatus. It localises to the golgi stack membrane. Inhibited by EDTA, Cu(2+) and Zn(2+). Functionally, catalyzes the transfer of beta-galactose from UDP-galactose to position 4 of alpha-1,6-linked fucose at the reducing end GlcNAc in N-glycan cores. Involved in susceptibility to the nematotoxic C.cinerea galectin Cgl2, likely by contributing to the synthesis of core alpha-1,6-fucosylated N-glycans to which Cgl2 binds. The sequence is that of Beta-1,4-galactosyltransferase galt-1 from Caenorhabditis elegans.